The sequence spans 294 residues: Putative inactive magnesium transporter MRS2-8 (294 aa).

A coiled-coil region spans residues 179–216; that stretch reads KLKSSMTRLTAQVQKIKDELEQLLEDDEDMAELYLSRK.

The protein belongs to the CorA metal ion transporter (MIT) (TC 1.A.35.5) family.

In Arabidopsis thaliana (Mouse-ear cress), this protein is Putative inactive magnesium transporter MRS2-8 (MRS2-8).